Here is a 722-residue protein sequence, read N- to C-terminus: Threonine--tRNA ligase 1, cytoplasmic (722 aa).

The segment covering 1–10 has biased composition (polar residues); that stretch reads MSQEKASSPS. The interval 1-48 is disordered; the sequence is MSQEKASSPSGKMDGEKPVDASEEKRKEGGKKKSKDGGGDGGRAELNP. Residues 13 to 27 are compositionally biased toward basic and acidic residues; the sequence is MDGEKPVDASEEKRK. Residues 78 to 142 enclose the TGS domain; sequence DSKPIKVTLP…ETDCTLELLK (65 aa). Lys-242 carries the post-translational modification N6-acetyllysine. The residue at position 245 (Thr-245) is a Phosphothreonine. Tyr-297 carries the phosphotyrosine modification. The residue at position 452 (Thr-452) is a Phosphothreonine.

The protein belongs to the class-II aminoacyl-tRNA synthetase family. Homodimer. Post-translationally, ISGylated.

It localises to the cytoplasm. It carries out the reaction tRNA(Thr) + L-threonine + ATP = L-threonyl-tRNA(Thr) + AMP + diphosphate + H(+). Functionally, catalyzes the attachment of threonine to tRNA(Thr) in a two-step reaction: threonine is first activated by ATP to form Thr-AMP and then transferred to the acceptor end of tRNA(Thr). Also edits incorrectly charged tRNA(Thr) via its editing domain, at the post-transfer stage. This chain is Threonine--tRNA ligase 1, cytoplasmic (Tars1), found in Mus musculus (Mouse).